The chain runs to 200 residues: Urease accessory protein UreG (200 aa).

Position 8 to 15 (8 to 15 (GPVGSGKT)) interacts with GTP.

This sequence belongs to the SIMIBI class G3E GTPase family. UreG subfamily. As to quaternary structure, homodimer. UreH, UreF and UreG form a complex that acts as a GTP-hydrolysis-dependent molecular chaperone, activating the urease apoprotein by helping to assemble the nickel containing metallocenter of UreC. The UreE protein probably delivers the nickel.

The protein localises to the cytoplasm. Its function is as follows. Facilitates the functional incorporation of the urease nickel metallocenter. This process requires GTP hydrolysis, probably effectuated by UreG. This is Urease accessory protein UreG from Helicobacter hepaticus (strain ATCC 51449 / 3B1).